The chain runs to 272 residues: uncharacterized protein (272 aa).

An N-terminal signal peptide occupies residues 1–20 (MMEPKSIFLLGLLLFRVGKL).

This is an uncharacterized protein from Caenorhabditis elegans.